Consider the following 112-residue polypeptide: Large ribosomal subunit protein eL30 (112 aa).

This sequence belongs to the eukaryotic ribosomal protein eL30 family.

The sequence is that of Large ribosomal subunit protein eL30 (RPL30) from Zea mays (Maize).